The sequence spans 252 residues: MKPLGRLRLGVNIDHVATVRNARGTSYPDPLRAGLLAEAAGADGITAHLREDRRHIRDEDITALMQGLRVPLNLEMATTPEMQAIALRHKPHAVCLVPERREERTTEGGIDVAGDIGRLKDFVAPLRAAGCRVSMFIGHDVRQIEASAEIGAAVVELHTGHYCDLVAEGRTAEAARELEALREGAALAHSLGLEVHAGHGISYDTVAEIAAFPQVMELNIGHFLIGEAIFRGLGSAIEGMRRRMDAAREAAA.

Residue asparagine 12 coordinates 3-amino-2-oxopropyl phosphate. Residue 14-15 (DH) coordinates 1-deoxy-D-xylulose 5-phosphate. Residue arginine 23 coordinates 3-amino-2-oxopropyl phosphate. The Proton acceptor role is filled by histidine 48. 2 residues coordinate 1-deoxy-D-xylulose 5-phosphate: arginine 50 and histidine 55. Glutamate 75 serves as the catalytic Proton acceptor. 1-deoxy-D-xylulose 5-phosphate is bound at residue threonine 105. The Proton donor role is filled by histidine 199. 3-amino-2-oxopropyl phosphate-binding positions include glycine 200 and 221 to 222 (GH).

It belongs to the PNP synthase family. Homooctamer; tetramer of dimers.

The protein resides in the cytoplasm. The catalysed reaction is 3-amino-2-oxopropyl phosphate + 1-deoxy-D-xylulose 5-phosphate = pyridoxine 5'-phosphate + phosphate + 2 H2O + H(+). It participates in cofactor biosynthesis; pyridoxine 5'-phosphate biosynthesis; pyridoxine 5'-phosphate from D-erythrose 4-phosphate: step 5/5. In terms of biological role, catalyzes the complicated ring closure reaction between the two acyclic compounds 1-deoxy-D-xylulose-5-phosphate (DXP) and 3-amino-2-oxopropyl phosphate (1-amino-acetone-3-phosphate or AAP) to form pyridoxine 5'-phosphate (PNP) and inorganic phosphate. This chain is Pyridoxine 5'-phosphate synthase, found in Cereibacter sphaeroides (strain ATCC 17029 / ATH 2.4.9) (Rhodobacter sphaeroides).